The sequence spans 190 residues: GTP cyclohydrolase 1 (190 aa).

Cys-75, His-78, and Cys-146 together coordinate Zn(2+).

Belongs to the GTP cyclohydrolase I family. Homomer.

The enzyme catalyses GTP + H2O = 7,8-dihydroneopterin 3'-triphosphate + formate + H(+). The protein operates within cofactor biosynthesis; 7,8-dihydroneopterin triphosphate biosynthesis; 7,8-dihydroneopterin triphosphate from GTP: step 1/1. The protein is GTP cyclohydrolase 1 of Campylobacter concisus (strain 13826).